Reading from the N-terminus, the 146-residue chain is Small ribosomal subunit protein uS15 (146 aa).

The protein belongs to the universal ribosomal protein uS15 family. Part of the 30S ribosomal subunit.

The polypeptide is Small ribosomal subunit protein uS15 (Picrophilus torridus (strain ATCC 700027 / DSM 9790 / JCM 10055 / NBRC 100828 / KAW 2/3)).